A 424-amino-acid polypeptide reads, in one-letter code: MSNLIPPHGGKGLVCCLLEGAELEAEKKKAATLPKLNISSRAKGDLIMMGIGGFSPLDGFMTKADWKGVCEDFLLADGTFWPIPVTLDASADDAAKINVGDEIALFDPEREEFMATMKVTEKYEMTEADKIFECEKVFMGEGTPTAEEFWKIAKDDHPGVQMVMNQGEFNLAGPVKVLSEAEYPEEYPGIYQRPAESRAIFEERGWKEIAAMQLRNPMHRSHEYLCKIAIEVCDGCFIHSLIGNLKPGDIPADVRVKCIDALVKNYFVEDKAVQGGYPLDMRYAGPREGLLHATFRQNYGCSRMIIGRDHAGVGDFYGMFEAQTIFDKIPTPEGEGKALLCTPLKIDWTFYCYKCDGMASLRTCPHAKEDRVLLSGTMLRKMLSEGGELPDHFGRDEVVAILREYYEGLTEKVEVKLHGAATGN.

This sequence belongs to the sulfate adenylyltransferase family.

It catalyses the reaction sulfate + ATP + H(+) = adenosine 5'-phosphosulfate + diphosphate. Its pathway is sulfur metabolism; hydrogen sulfide biosynthesis; sulfite from sulfate: step 1/3. The protein is Sulfate adenylyltransferase of Desulfatibacillum aliphaticivorans.